The chain runs to 147 residues: Sec-independent protein translocase protein TatB (147 aa).

A helical membrane pass occupies residues 1–21; it reads MFDFGFSELIVIAVVTLIVVG. The interval 117 to 147 is disordered; it reads APAPMSLAPHGDAASAGREPAAVPGSGPEKA.

The protein belongs to the TatB family. In terms of assembly, the Tat system comprises two distinct complexes: a TatABC complex, containing multiple copies of TatA, TatB and TatC subunits, and a separate TatA complex, containing only TatA subunits. Substrates initially bind to the TatABC complex, which probably triggers association of the separate TatA complex to form the active translocon.

It is found in the cell inner membrane. Functionally, part of the twin-arginine translocation (Tat) system that transports large folded proteins containing a characteristic twin-arginine motif in their signal peptide across membranes. Together with TatC, TatB is part of a receptor directly interacting with Tat signal peptides. TatB may form an oligomeric binding site that transiently accommodates folded Tat precursor proteins before their translocation. This Aromatoleum aromaticum (strain DSM 19018 / LMG 30748 / EbN1) (Azoarcus sp. (strain EbN1)) protein is Sec-independent protein translocase protein TatB.